The following is a 1400-amino-acid chain: MKSSGPVERLLRALGRRDSSRATSRPRKAEPHSFREKVFRKKTPVCAVCKVTIDGTGVSCRVCKVATHRKCEAKVTSSCQALPPAELRRSTAPVRRIEHLGSTKSLNHSKQRSTLPRSFSLDPLMERRWDLDLTYVTERILAAAFPARPDEQRHRGHLRELAHVLQSKHRDKYLLFNLSEKRHDLTRLNPKVQDFGWPELHAPPLDKLCSICKAMETWLSADPQHVVVLYCKGSKGKLGVIVSAYMHYSKISAGADQALATLTMRKFCEDKVATELQPSQRRYVSYFSGLLSGSIRMNSSPLFLHYVFVPVLPAFEPNTGFQPFLKIYQSMQLVYTSGVYRIAGPGPQQLCISLEPALLLKGDVMVTCYHKGGQGTDRTLVFRVQFHTCTIHGSRLTFPKDQLDEAWADERFPFQASVEFVFSSSPEKVKGNTPRNDPSVSVDYNTTEPAVRWDSYENFNQHHEDSVDGALAHTRGPLDGSPYAQVQRVPRQTPPAPSPELPPPPMLSVSSDSGHSSTLTTEHTAESPGRPPPTAAERQELDRLLGGCGVASAGRGAGRETAILDDEEQPSVGGGLHLGMYSGHRPGLSRRCSCRQGFREPCGVPNGSYYRPEGTLERRRPPYGGYEGHPQGYAEASVEKRRLCRSLSEGPYPYAPELGKPANGDFGYRPAGYREVVILEDPGVPALCSCPACEEKLALPTAALYGLRLEREAAEGWSSEVGKPLLHPVRPGHPLPLLVPACGHHHAPMPDYGCLKPPKVGEEGHEGCSYAVCSEGRYGHSGYPALVTYGYGGAVPSYCPAYGRAPHSCGSPSEGRGYPSPGAHSPRAGSVSPGSPPYLQPRKLGYEISAEDGRDKYPLSGHLASTGPLASTESPEPSWRDGSSGHSTLPRSPRDPQCSASSELSGPSTPLHTSSPVQGKESNRRQDTTRSPSLAPTQRLSPGEALPSVVQGVAEKTPELLTSSRPEQLDPSPFSQTSAPGSPNGWPQERSPGGHTNSASPRSPVPTTLPGLRHAPWQGPRGTSDSPDGSPLTPVPTQMPWLVGSPEPPQSSPTPAFPLATSYDANGPIQPPLPEKRHLPGSGQQPSPPARSTNQHVTFASPLPDVTQPPEHPLQENQSNVKFVQDTSKFWYKPHLSRDQAIALLKDKDPGAFLIRDSHSFQGAYGLALKVATPPPSAQPWKGDPSEQLVRHFLIETGPKGVKIKGCPTEPYFGSLSALVSQHSISPISLPCCLRIPSKDPLEETPEAPVPTNMSTAADLLRQGAACSVLYLTSVETESLTGPQAVAKASSAALSCSPVPVPAIVHFKVSAQGITLTDNQRKLFFRRHYPVNSITFSSTDPQDRRWTNPDGATSKIFGFVAKKPGSPWENVCHLFAELDPDQPASAIVTFITKVLLGQRK.

The Phorbol-ester/DAG-type zinc-finger motif lies at 31 to 79; that stretch reads PHSFREKVFRKKTPVCAVCKVTIDGTGVSCRVCKVATHRKCEAKVTSSC. Position 91 is a phosphothreonine (Thr-91). Phosphoserine occurs at positions 118 and 120. The region spanning 122-294 is the Phosphatase tensin-type domain; the sequence is DPLMERRWDL…SYFSGLLSGS (173 aa). Cys-231 functions as the Phosphocysteine intermediate in the catalytic mechanism. In terms of domain architecture, C2 tensin-type spans 299-425; that stretch reads SSPLFLHYVF…ASVEFVFSSS (127 aa). Positions 425–444 are disordered; sequence SPEKVKGNTPRNDPSVSVDY. Over residues 433 to 444 the composition is skewed to polar residues; the sequence is TPRNDPSVSVDY. Residue Ser-455 is modified to Phosphoserine. Tyr-456 is modified (phosphotyrosine). Ser-466 is subject to Phosphoserine. Thr-474 bears the Phosphothreonine mark. Position 481 is a phosphoserine (Ser-481). Residue Tyr-483 is modified to Phosphotyrosine. The segment at 488–536 is disordered; the sequence is RVPRQTPPAPSPELPPPPMLSVSSDSGHSSTLTTEHTAESPGRPPPTAA. Pro residues predominate over residues 492–506; sequence QTPPAPSPELPPPPM. Omega-N-methylarginine is present on Arg-555. The disordered stretch occupies residues 809-1114; sequence CGSPSEGRGY…DVTQPPEHPL (306 aa). A phosphoserine mark is found at Ser-820, Ser-825, Ser-830, Ser-832, and Ser-835. Polar residues-rich tracts occupy residues 898–917 and 929–940; these read CSAS…SSPV and TRSPSLAPTQRL. The residue at position 909 (Thr-909) is a Phosphothreonine. 3 positions are modified to phosphoserine: Ser-931, Ser-941, and Ser-972. Thr-977 carries the post-translational modification Phosphothreonine. Ser-991 and Ser-1003 each carry phosphoserine. Pro residues predominate over residues 1046-1056; sequence PEPPQSSPTPA. The segment covering 1082–1098 has biased composition (polar residues); sequence SGQQPSPPARSTNQHVT. Ser-1087 carries the post-translational modification Phosphoserine. In terms of domain architecture, SH2 spans 1131-1238; it reads WYKPHLSRDQ…SLPCCLRIPS (108 aa). A Phosphothreonine modification is found at Thr-1173. At Ser-1238 the chain carries Phosphoserine. In terms of domain architecture, PTB spans 1266–1399; the sequence is ACSVLYLTSV…FITKVLLGQR (134 aa).

The protein belongs to the PTEN phosphatase protein family. In terms of assembly, interacts with AXL. Interacts with SYK; leading to its phosphorylation. Interacts with SQSTM1 (via PB1 domain); the interaction leads to sequestration of TNS2 in cytoplasmic aggregates with SQSTM1 and promotes TNS2 ubiquitination and proteasomal degradation. In terms of processing, ubiquitinated following sequestration in cytoplasmic aggregates with SQSTM1, leading to proteasomal degradation. In the adult kidney, expressed mainly in glomeruli (at protein level). In the newborn kidney, localizes on the basal surface of podocytes along the glomerular basement membrane and not in endothelial cells. Low expression levels in anabolic skeletal muscles.

The protein localises to the cell junction. It localises to the focal adhesion. The protein resides in the cell membrane. It is found in the cytoplasm. The catalysed reaction is O-phospho-L-tyrosyl-[protein] + H2O = L-tyrosyl-[protein] + phosphate. Tyrosine-protein phosphatase which regulates cell motility, proliferation and muscle-response to insulin. Phosphatase activity is mediated by binding to phosphatidylinositol-3,4,5-triphosphate (PtdIns(3,4,5)P3) via the SH2 domain. In muscles and under catabolic conditions, dephosphorylates IRS1 leading to its degradation and muscle atrophy. Negatively regulates PI3K-AKT pathway activation. Dephosphorylates nephrin NPHS1 in podocytes which affects mTORC1 complex activity. Under normal glucose conditions, NPHS1 outcompetes IRS1 for binding to phosphatidylinositol 3-kinase (PI3K) which balances mTORC1 activity but high glucose conditions lead to up-regulation of TNS2, increased NPHS1 dephosphorylation and activation of mTORC1, contributing to podocyte hypertrophy and proteinuria. Required for correct podocyte morphology, podocyte-glomerular basement membrane interaction and integrity of the glomerular filtration barrier. Enhances RHOA activation in the presence of DLC1. Plays a role in promoting DLC1-dependent remodeling of the extracellular matrix. The polypeptide is Tensin-2 (Tns2) (Mus musculus (Mouse)).